A 552-amino-acid chain; its full sequence is MATPNSGRAASVYSEVQSSRIEHVLPLPSVLNHPFKIVQGPPSSAAGNPDEIAKLFPNLFGQPSAMLVPDVADSLDSNQQLKIGLVLSGGQAPGGHNVISGIFDYLQDRAKGSILYGFRGGPAGIMKCNYVQLTADYIHPYRNQGGFDMICSGRDKIETPEQFKQAEETAGKLDLNGLVVIGGDDSNTNACLLAENFRSKNLKTRVIGCPKTIDGDLKCKEVPTSFGFDTACKIYSEMIGNVMIDARSTGKYYHFVRLMGRAASHITLECALQTHPNITIIGEEVAAKKLALKDVTDYIVDVICKRADLGYNYGVILIPEGLIDFIPEVQNLIAELNEILAHDVVDEGGLWKKKLTSQSLQLFEFLPVAIQEQLMLERDPHGNVQVAKIETEKMLIQMVETELEKRKQQGTYKAHFKGQSHFFGYEGRCGLPTNFDSTYCYALGYAAGALLHSGKTGLISSVGNLGAPVAEWTVGGTALTSLMDVERRHGKFKPVIKKAMVELEGAPFKKFASLREEWALKNRYVSPGPIQFMGPGSDAASHTLLLELGSVA.

Gly90 is a diphosphate binding site. Asp184 contacts Mg(2+). Substrate is bound by residues 212–214 (TID), 251–252 (KY), 259–261 (MGR), Glu320, and 425–428 (YEGR). Asp214 (proton acceptor) is an active-site residue.

It belongs to the phosphofructokinase type A (PFKA) family. PPi-dependent PFK group II subfamily. Clade 'Long' sub-subfamily. In terms of assembly, tetramer of two alpha (regulatory) and two beta (catalytic) chains. Mg(2+) serves as cofactor.

The protein localises to the cytoplasm. It catalyses the reaction beta-D-fructose 6-phosphate + diphosphate = beta-D-fructose 1,6-bisphosphate + phosphate + H(+). The protein operates within carbohydrate degradation; glycolysis; D-glyceraldehyde 3-phosphate and glycerone phosphate from D-glucose: step 3/4. Allosterically activated by fructose 2,6-bisphosphate. Catalytic subunit of pyrophosphate--fructose 6-phosphate 1-phosphotransferase. Catalyzes the phosphorylation of D-fructose 6-phosphate, the first committing step of glycolysis. Uses inorganic phosphate (PPi) as phosphoryl donor instead of ATP like common ATP-dependent phosphofructokinases (ATP-PFKs), which renders the reaction reversible, and can thus function both in glycolysis and gluconeogenesis. This Ricinus communis (Castor bean) protein is Pyrophosphate--fructose 6-phosphate 1-phosphotransferase subunit beta.